A 591-amino-acid chain; its full sequence is 2-succinyl-5-enolpyruvyl-6-hydroxy-3-cyclohexene-1-carboxylate synthase (591 aa).

It belongs to the TPP enzyme family. MenD subfamily. As to quaternary structure, homodimer. Requires Mg(2+) as cofactor. Mn(2+) serves as cofactor. The cofactor is thiamine diphosphate.

The catalysed reaction is isochorismate + 2-oxoglutarate + H(+) = 5-enolpyruvoyl-6-hydroxy-2-succinyl-cyclohex-3-ene-1-carboxylate + CO2. It functions in the pathway quinol/quinone metabolism; 1,4-dihydroxy-2-naphthoate biosynthesis; 1,4-dihydroxy-2-naphthoate from chorismate: step 2/7. The protein operates within quinol/quinone metabolism; menaquinone biosynthesis. Functionally, catalyzes the thiamine diphosphate-dependent decarboxylation of 2-oxoglutarate and the subsequent addition of the resulting succinic semialdehyde-thiamine pyrophosphate anion to isochorismate to yield 2-succinyl-5-enolpyruvyl-6-hydroxy-3-cyclohexene-1-carboxylate (SEPHCHC). The chain is 2-succinyl-5-enolpyruvyl-6-hydroxy-3-cyclohexene-1-carboxylate synthase from Salinibacter ruber (strain DSM 13855 / M31).